Consider the following 352-residue polypeptide: Molybdenum import ATP-binding protein ModC (352 aa).

Positions 1–229 (MLELNFSQTL…SVMNPWLPKE (229 aa)) constitute an ABC transporter domain. Residue 31–38 (GVSGAGKT) participates in ATP binding. The region spanning 289-352 (QTSIRNVLRA…AQIKSVSITA (64 aa)) is the Mop domain.

This sequence belongs to the ABC transporter superfamily. Molybdate importer (TC 3.A.1.8) family. As to quaternary structure, the complex is composed of two ATP-binding proteins (ModC), two transmembrane proteins (ModB) and a solute-binding protein (ModA).

The protein localises to the cell inner membrane. The catalysed reaction is molybdate(out) + ATP + H2O = molybdate(in) + ADP + phosphate + H(+). Its function is as follows. Part of the ABC transporter complex ModABC involved in molybdenum import. Responsible for energy coupling to the transport system. This Shigella boydii serotype 4 (strain Sb227) protein is Molybdenum import ATP-binding protein ModC.